Reading from the N-terminus, the 335-residue chain is Trans-3-hydroxy-L-proline dehydratase (335 aa).

Cysteine 91 (proton acceptor) is an active-site residue. Substrate contacts are provided by residues glycine 92 to histidine 93, aspartate 251, and glycine 256 to serine 257.

The protein belongs to the proline racemase family.

It catalyses the reaction trans-3-hydroxy-L-proline = 1-pyrroline-2-carboxylate + H2O. Its function is as follows. Catalyzes the dehydration of trans-3-hydroxy-L-proline (t3LHyp) to Delta(1)-pyrroline-2-carboxylate (Pyr2C). Is likely involved in a degradation pathway that converts t3LHyp to L-proline. Displays neither trans-4-hydroxy-L-proline (t4LHyp) epimerase nor proline racemase activity. This Burkholderia ambifaria (strain ATCC BAA-244 / DSM 16087 / CCUG 44356 / LMG 19182 / AMMD) (Burkholderia cepacia (strain AMMD)) protein is Trans-3-hydroxy-L-proline dehydratase.